A 548-amino-acid chain; its full sequence is uncharacterized protein (548 aa).

The 193-residue stretch at 8 to 200 folds into the DhaL domain; sequence KLFADMIIQG…LLCVYEGFLK (193 aa).

This is an uncharacterized protein from Staphylococcus aureus (strain NCTC 8325 / PS 47).